The chain runs to 290 residues: Fat storage-inducing transmembrane protein 1 (290 aa).

Transmembrane regions (helical) follow at residues 1-21, 26-46, 65-85, 173-193, and 205-225; these read MFLN…LGNT, HFHL…LWVS, SGWG…SFSV, LLLC…GPYL, and ILFL…LCLL.

It belongs to the FIT family. FIT1 subfamily.

It localises to the endoplasmic reticulum membrane. May play an important role in the formation of lipid droplets (LDs) which are storage organelles at the center of lipid and energy homeostasis. May directly bind to diacylglycerol (DAGs) and triacylglycerol. The sequence is that of Fat storage-inducing transmembrane protein 1 (fitm1l) from Danio rerio (Zebrafish).